Here is a 951-residue protein sequence, read N- to C-terminus: MSFVIAAPEVIAAAATDLASLGSSISAANAAAAANTTALIAAGADEVSTAIAALFGAHGQAYQALSAQAQAFHAQFVQALTSGGGAYAAAEAAAVSPLLDPINEFFLANTGRPLIGNGANGAPGTGANGGDGGWLIGNGGAGGSGAAGVNGGAGGNGGAGGLIGNGGAGGAGGVASSGIGGSGGAGGNAMLFGAGGAGGAGGGVVALTGGAGGAGGAGGNAGLLFGAAGVGGAGGFTNGSALGGAGGAGGAGGLFATGGVGGSGGAGSSGGAGGAGGAGGLFGAGGTGGHGGFADSSFGGVGGAGGAGGLFGAGGEGGSGGHSLVAGGDGGAGGNAGMLALGAAGGAGGIGGDGGTLTAGGIGGAGGAGGNAGLLFGSGGSGGAGGFGFADGGQGGPGGNAGTVFGSGGAGGNGGVGQGFAGGIGGAGGTPGLIGNGGNGGNGGASAVTGGNGGIGGTGVLIGNGGNGGSGGIGAGKAGVGGVSGLLLGLDGFNAPASTSPLHTLQQNVLNVVNEPFQTLTGRPLIGNGANGTPGTGADGGAGGWLFGNGANGTPGTGAAGGAGGWLFGNGGNGGHGATNTAATATGGAGGAGGILFGTGGNGGTGGIATGAGGIGGAGGAGGVSLLIGSGGTGGNGGNSIGVAGIGGAGGRGGDAGLLFGAAGTGGHGAAGGVPAGVGGAGGNGGLFANGGAGGAGGFNAAGGNGGNGGLFGTGGTGGAGTNFGAGGNGGNGGLFGAGGTGGAAGSGGSGITTGGGGHGGNAGLLSLGASGGAGGSGGASSLAGGAGGTGGNGALLFGFGGAGGAGGHGGAALTSIQQGGAGGAGGNGGLLFGSAGAGGAGGSGANALGAGTGGTGGDGGHAGVFGNGGDGGCRRVWRRYRRQRWCRRQRRADRQRRQRRQRRQSRGHARCRRHRRAAARRERTQRLAIAGRPATTRGVEGISCSPQMMP.

Residues 4–94 (VIAAPEVIAA…GAYAAAEAAA (91 aa)) enclose the PE domain. The span at 887 to 919 (CRRQRRADRQRRQRRQRRQSRGHARCRRHRRAA) shows a compositional bias: basic residues. Residues 887-951 (CRRQRRADRQ…GISCSPQMMP (65 aa)) form a disordered region.

It belongs to the mycobacterial PE family. PGRS subfamily.

It is found in the cell outer membrane. The protein resides in the secreted. It localises to the cell wall. The protein localises to the cell surface. Functionally, the arginine-rich C-terminal region protrudes from the mycobacterial membrane and mediates M.tuberculosis entry into host epithelial cells. May serve as a bridge between mycobacteria and host cells by interacting with specific host phospholipids and extracting them from host cells, for their direct integration or as a source of phosphate, during phases of TB pathogenesis when M.tuberculosis is short of phosphate supply. This is PE-PGRS family protein PE_PGRS3 (PE_PGRS3) from Mycobacterium tuberculosis (strain CDC 1551 / Oshkosh).